Reading from the N-terminus, the 711-residue chain is Phosphate acetyltransferase (711 aa).

A phosphate acetyltransferase region spans residues 390–711; that stretch reads AFRFQLTELA…IALTAIQATQ (322 aa).

In the N-terminal section; belongs to the CobB/CobQ family. This sequence in the C-terminal section; belongs to the phosphate acetyltransferase and butyryltransferase family. In terms of assembly, homohexamer.

It is found in the cytoplasm. The catalysed reaction is acetyl-CoA + phosphate = acetyl phosphate + CoA. Its pathway is metabolic intermediate biosynthesis; acetyl-CoA biosynthesis; acetyl-CoA from acetate: step 2/2. In terms of biological role, involved in acetate metabolism. In Haemophilus influenzae (strain ATCC 51907 / DSM 11121 / KW20 / Rd), this protein is Phosphate acetyltransferase (pta).